The primary structure comprises 110 residues: Lichenan-specific phosphotransferase enzyme IIA component (110 aa).

In terms of domain architecture, PTS EIIA type-3 spans 3-101 (EEMEQIIFQI…AAEIIELYEK (99 aa)). Catalysis depends on His77, which acts as the Tele-phosphohistidine intermediate; by HPr.

Its subcellular location is the cytoplasm. Its function is as follows. The phosphoenolpyruvate-dependent sugar phosphotransferase system (PTS), a major carbohydrate active -transport system, catalyzes the phosphorylation of incoming sugar substrates concomitant with their translocation across the cell membrane. This system is involved in lichenan transport. The protein is Lichenan-specific phosphotransferase enzyme IIA component (licA) of Bacillus subtilis (strain 168).